The sequence spans 271 residues: Phosphonates import ATP-binding protein PhnC 2 (271 aa).

The 244-residue stretch at 2-245 (LTIDKLTKRF…VARDIYGAGA (244 aa)) folds into the ABC transporter domain. 34–41 (GRSGAGKS) contributes to the ATP binding site.

The protein belongs to the ABC transporter superfamily. Phosphonates importer (TC 3.A.1.9.1) family. The complex is composed of two ATP-binding proteins (PhnC), two transmembrane proteins (PhnE) and a solute-binding protein (PhnD).

The protein localises to the cell inner membrane. It catalyses the reaction phosphonate(out) + ATP + H2O = phosphonate(in) + ADP + phosphate + H(+). In terms of biological role, part of the ABC transporter complex PhnCDE involved in phosphonates import. Responsible for energy coupling to the transport system. The protein is Phosphonates import ATP-binding protein PhnC 2 of Roseobacter denitrificans (strain ATCC 33942 / OCh 114) (Erythrobacter sp. (strain OCh 114)).